The primary structure comprises 160 residues: CXXC motif containing zinc binding protein (160 aa).

Cys33, Cys36, Cys67, and Cys70 together coordinate Zn(2+). Ser75 carries the phosphoserine modification.

Belongs to the UPF0587 family. As to quaternary structure, monomer.

This Rattus norvegicus (Rat) protein is CXXC motif containing zinc binding protein.